A 332-amino-acid polypeptide reads, in one-letter code: Transcription initiation factor IIB 2 (332 aa).

Polar residues predominate over residues Met-1 to Tyr-10. The disordered stretch occupies residues Met-1–Val-36. Basic and acidic residues predominate over residues Ala-14 to Thr-29. The segment at Glu-33–Glu-63 adopts a TFIIB-type zinc-finger fold. Zn(2+) is bound by residues Cys-37, Cys-40, Cys-55, and Cys-58. The segment at Asp-77–Trp-106 is disordered. 2 repeat units span residues Gly-149 to Leu-232 and Gln-243 to Glu-324.

This sequence belongs to the TFIIB family.

Stabilizes TBP binding to an archaeal box-A promoter. Also responsible for recruiting RNA polymerase II to the pre-initiation complex (DNA-TBP-TFIIB). The chain is Transcription initiation factor IIB 2 from Haloferax volcanii (strain ATCC 29605 / DSM 3757 / JCM 8879 / NBRC 14742 / NCIMB 2012 / VKM B-1768 / DS2) (Halobacterium volcanii).